The following is a 247-amino-acid chain: Adenosylcobinamide-GDP ribazoletransferase (247 aa).

6 helical membrane passes run 34–54, 59–79, 113–133, 138–158, 171–193, and 194–214; these read IVTF…VFVA, CGIP…TGGF, GGLA…ELAL, MLAA…LLMY, VFIG…ILAA, and ILMP…AIFI.

This sequence belongs to the CobS family. Mg(2+) is required as a cofactor.

The protein localises to the cell inner membrane. The catalysed reaction is alpha-ribazole + adenosylcob(III)inamide-GDP = adenosylcob(III)alamin + GMP + H(+). It catalyses the reaction alpha-ribazole 5'-phosphate + adenosylcob(III)inamide-GDP = adenosylcob(III)alamin 5'-phosphate + GMP + H(+). The protein operates within cofactor biosynthesis; adenosylcobalamin biosynthesis; adenosylcobalamin from cob(II)yrinate a,c-diamide: step 7/7. Functionally, joins adenosylcobinamide-GDP and alpha-ribazole to generate adenosylcobalamin (Ado-cobalamin). Also synthesizes adenosylcobalamin 5'-phosphate from adenosylcobinamide-GDP and alpha-ribazole 5'-phosphate. This is Adenosylcobinamide-GDP ribazoletransferase from Citrobacter koseri (strain ATCC BAA-895 / CDC 4225-83 / SGSC4696).